A 228-amino-acid polypeptide reads, in one-letter code: MIGIIGAMEEEVTILKRKLNDMNEINIAHVKFYVGKLNHKEVVLTQSGIGKVNASISTTLLIEKFNPEVVINTGSAGALDQTLSIGDILVSNHVLYHDANATAFGYEYGQIPQMPKTYTTDPTLLKKTMHVLEQQQLNGKVGMIVSGDSFIGSSEQRQKIKQQFPEAMAVEMEATAIAQTCYQFKVPFIVTRAVSDLANGKADISFEEFLDKAALSSSETVSLLVESL.

Residue Glu11 is the Proton acceptor of the active site. Residues Gly77, Ile151, and 172-173 (ME) contribute to the substrate site. The active-site Proton donor is Asp196.

Belongs to the PNP/UDP phosphorylase family. MtnN subfamily.

It catalyses the reaction S-adenosyl-L-homocysteine + H2O = S-(5-deoxy-D-ribos-5-yl)-L-homocysteine + adenine. The enzyme catalyses S-methyl-5'-thioadenosine + H2O = 5-(methylsulfanyl)-D-ribose + adenine. The catalysed reaction is 5'-deoxyadenosine + H2O = 5-deoxy-D-ribose + adenine. It functions in the pathway amino-acid biosynthesis; L-methionine biosynthesis via salvage pathway; S-methyl-5-thio-alpha-D-ribose 1-phosphate from S-methyl-5'-thioadenosine (hydrolase route): step 1/2. In terms of biological role, catalyzes the irreversible cleavage of the glycosidic bond in both 5'-methylthioadenosine (MTA) and S-adenosylhomocysteine (SAH/AdoHcy) to adenine and the corresponding thioribose, 5'-methylthioribose and S-ribosylhomocysteine, respectively. Also cleaves 5'-deoxyadenosine, a toxic by-product of radical S-adenosylmethionine (SAM) enzymes, into 5-deoxyribose and adenine. The polypeptide is 5'-methylthioadenosine/S-adenosylhomocysteine nucleosidase (Staphylococcus epidermidis (strain ATCC 12228 / FDA PCI 1200)).